Consider the following 418-residue polypeptide: Gamma-glutamyl phosphate reductase (418 aa).

It belongs to the gamma-glutamyl phosphate reductase family.

The protein resides in the cytoplasm. The catalysed reaction is L-glutamate 5-semialdehyde + phosphate + NADP(+) = L-glutamyl 5-phosphate + NADPH + H(+). The protein operates within amino-acid biosynthesis; L-proline biosynthesis; L-glutamate 5-semialdehyde from L-glutamate: step 2/2. Its function is as follows. Catalyzes the NADPH-dependent reduction of L-glutamate 5-phosphate into L-glutamate 5-semialdehyde and phosphate. The product spontaneously undergoes cyclization to form 1-pyrroline-5-carboxylate. In Aliivibrio fischeri (strain MJ11) (Vibrio fischeri), this protein is Gamma-glutamyl phosphate reductase.